Consider the following 530-residue polypeptide: NMDA receptor synaptonuclear signaling and neuronal migration factor (530 aa).

Residue Gly2 is the site of N-myristoyl glycine attachment. Positions 2–233 (GAAASRRRAL…FSFQTATTTM (232 aa)) are necessary and sufficient to elicit dendritic processes and synaptic contacts. Disordered stretches follow at residues 34 to 67 (SQSHPENRNGADHLLADAYSGHDGSPEMQPAPQN) and 125 to 197 (KGRR…GRRK). The span at 38–48 (PENRNGADHLL) shows a compositional bias: basic and acidic residues. Basic residues predominate over residues 125-137 (KGRRQRHPHHHSQ). Residues 153–162 (PCQSWAGSRQ) show a composition bias toward polar residues. Phosphoserine is present on Ser204. The Nuclear localization signal signature appears at 247-250 (RRKR). The disordered stretch occupies residues 285-312 (RSFSRSWSDPTPMKADTSHDSRDSSDLQ). 2 positions are modified to phosphoserine: Ser290 and Ser292. Residues 300–309 (DTSHDSRDSS) show a composition bias toward basic and acidic residues.

It belongs to the NSMF family. In terms of assembly, interacts with KPNA1; the interaction occurs in a calcium-independent manner after synaptic NMDA receptor stimulation and is required for nuclear import of NSMF but is competed by CABP1. Interacts (via the central NLS-containing motif region) with CABP1 (via EF-hands 1 and 2); the interaction occurs in a calcium-dependent manner after synaptic NMDA receptor stimulation and prevents the nuclear import of NSMF. Cannot be competed by calmodulin. Proteolytically processed after NMDA receptor activation. Cleaved in a calcium-dependent and calpain-sensitive manner. Calpain cleavage is essential for the translocation process from dendrites to the nucleus. In terms of tissue distribution, highly expressed in adult and fetal brain. Weakly expressed in heart, liver, spleen, testis, small intestine, skeletal muscle, peripheral white blood cells and kidney.

It is found in the nucleus. Its subcellular location is the nucleus envelope. The protein localises to the nucleus membrane. The protein resides in the nucleus matrix. It localises to the cytoplasm. It is found in the cell cortex. Its subcellular location is the cytoskeleton. The protein localises to the cell membrane. The protein resides in the cell projection. It localises to the dendrite. It is found in the synapse. Its subcellular location is the synaptosome. The protein localises to the postsynaptic density. The protein resides in the membrane. Functionally, couples NMDA-sensitive glutamate receptor signaling to the nucleus and triggers long-lasting changes in the cytoarchitecture of dendrites and spine synapse processes. Part of the cAMP response element-binding protein (CREB) shut-off signaling pathway. Stimulates outgrowth of olfactory axons and migration of gonadotropin-releasing hormone (GnRH) and luteinizing-hormone-releasing hormone (LHRH) neuronal cells. The chain is NMDA receptor synaptonuclear signaling and neuronal migration factor (NSMF) from Homo sapiens (Human).